The following is a 448-amino-acid chain: Vimentin (448 aa).

Residues 1-77 form a head region; that stretch reads PRHLEPAGSN…FSLADAINTE (77 aa). At Ser-9 the chain carries Phosphoserine. An O-linked (GlcNAc) threonine glycan is attached at Thr-16. Position 17 is a phosphoserine; by PKC; alternate (Ser-17). Ser-17 carries O-linked (GlcNAc) serine; alternate glycosylation. Residue Ser-22 is modified to Phosphoserine; by CaMK2, PKA, PKC and ROCK2. Phosphoserine occurs at positions 29, 31, and 33. Tyr-35 carries the phosphotyrosine modification. Phosphoserine is present on Ser-37. Phosphoserine; by CDK5 and CDK1 is present on Ser-38. The residue at position 43 (Tyr-43) is a Phosphotyrosine. At Ser-48 the chain carries Phosphoserine; by PKA and PKC. Position 54 is a phosphoserine; by AURKB and ROCK2 (Ser-54). Position 55 is a phosphoserine (Ser-55). Ser-65 carries the phosphoserine; by CaMK2 modification. Residue Ser-69 is modified to Phosphoserine. Residues 78 to 113 are coil 1A; sequence FKNTRTNEKVELQELNDRFADYIDKVRFLEQQNKIL. A coiled-coil region spans residues 78 to 113; that stretch reads FKNTRTNEKVELQELNDRFADYIDKVRFLEQQNKIL. Residues 85 to 393 enclose the IF rod domain; sequence EKVELQELND…KLLEGEESRI (309 aa). Lys-86 is covalently cross-linked (Glycyl lysine isopeptide (Lys-Gly) (interchain with G-Cter in SUMO2)). The residue at position 99 (Tyr-99) is a Phosphotyrosine. N6-acetyllysine; alternate is present on residues Lys-102, Lys-111, and Lys-121. Lys-102 and Lys-111 each carry N6-succinyllysine; alternate. Residues Lys-102, Lys-111, and Lys-121 each participate in a glycyl lysine isopeptide (Lys-Gly) (interchain with G-Cter in SUMO2); alternate cross-link. The segment at 114–135 is linker 1; it reads LAELEQLKGQGKSRLGDLYEEE. Ser-126 carries the post-translational modification Phosphoserine. Residues 136–227 adopt a coiled-coil conformation; the sequence is MRELRRQVDQ…KLHDEEIQEL (92 aa). The segment at 136 to 227 is coil 1B; it reads MRELRRQVDQ…KLHDEEIQEL (92 aa). Lys-150 is modified (N6-acetyllysine). N6-acetyllysine; alternate is present on Lys-170. An N6-succinyllysine; alternate modification is found at Lys-170. A Phosphoserine modification is found at Ser-196. Lys-205 is subject to N6-acetyllysine; alternate. Lys-205 is covalently cross-linked (Glycyl lysine isopeptide (Lys-Gly) (interchain with G-Cter in SUMO2); alternate). Ser-208 carries the phosphoserine modification. At Lys-217 the chain carries N6-acetyllysine. Residues 228 to 250 are linker 12; sequence QAQIQEQHVQIDVDVSKPDLTAA. Lys-244 is covalently cross-linked (Glycyl lysine isopeptide (Lys-Gly) (interchain with G-Cter in SUMO2)). The segment at 251–389 is coil 2; that stretch reads LRDVRQQYES…ATYRKLLEGE (139 aa). Lys-276 is modified (N6-acetyllysine; alternate). The residue at position 276 (Lys-276) is an N6-succinyllysine; alternate. Lys-276 participates in a covalent cross-link: Glycyl lysine isopeptide (Lys-Gly) (interchain with G-Cter in SUMO2); alternate. The residue at position 281 (Ser-281) is a Phosphoserine. A coiled-coil region spans residues 285-389; sequence NRNNDALRQA…ATYRKLLEGE (105 aa). Residue Lys-295 forms a Glycyl lysine isopeptide (Lys-Gly) (interchain with G-Cter in SUMO2) linkage. At Ser-307 the chain carries Phosphoserine. Residues 308-311 carry the [IL]-x-C-x-x-[DE] motif motif; it reads LTCE. N6-acetyllysine; alternate is present on Lys-355. Lys-355 participates in a covalent cross-link: Glycyl lysine isopeptide (Lys-Gly) (interchain with G-Cter in SUMO2); alternate. Positions 390-448 are tail; the sequence is ESRISLPLPNFSSLNLRETNLESLPLVDTHSKRTLLIKTVETRDGQVINETSQHHDDLE. 4 positions are modified to phosphoserine: Ser-391, Ser-394, Ser-401, and Ser-402. Phosphothreonine is present on Thr-408. Ser-412 is subject to Phosphoserine. Thr-418 bears the Phosphothreonine mark. Ser-420 carries the post-translational modification Phosphoserine. Lys-421 participates in a covalent cross-link: Glycyl lysine isopeptide (Lys-Gly) (interchain with G-Cter in SUMO2). Position 427 is an N6-acetyllysine; alternate (Lys-427). Lys-427 is subject to N6-succinyllysine; alternate. Lys-427 participates in a covalent cross-link: Glycyl lysine isopeptide (Lys-Gly) (interchain with G-Cter in SUMO2); alternate. Residue Lys-427 forms a Glycyl lysine isopeptide (Lys-Gly) (interchain with G-Cter in SUMO1); alternate linkage. Phosphothreonine occurs at positions 428 and 440. A Phosphoserine modification is found at Ser-441.

Belongs to the intermediate filament family. Homomer assembled from elementary dimers. Identified in complexes that contain VIM, EZR, AHNAK, BFSP1, BFSP2, ANK2, PLEC, PRX and spectrin. Interacts with BCAS3. Interacts with LGSN. Interacts with SYNM. Interacts (via rod region) with PLEC (via CH 1 domain). Interacts with STK33. Interacts with LARP6. Interacts with RAB8B. Interacts with TOR1A; the interaction associates TOR1A with the cytoskeleton. Interacts with TOR1AIP1. Interacts with TOR1AIP1. Interacts with DIAPH1. Interacts with EPPK1; interaction is dependent of higher-order structure of intermediate filament. Interacts with the non-receptor tyrosine kinase SRMS; the interaction leads to phosphorylation of VIM. Interacts with NOD2. Interacts (via head region) with CORO1C. Interacts with HDGF. Interacts with PRKCE (via phorbol-ester/DAG-type 2 domain). Interacts with BFSP2. Interacts with PPL. Interacts with PKP1 and PKP2. Interacts with SCRIB (via PDZ domains); the interaction protects SCRIB from proteasomal degradation and facilitates SCRIB localization to intermediate filaments, the interaction is reduced by cell contact inhibition. In terms of processing, one of the most prominent phosphoproteins in various cells of mesenchymal origin. Phosphorylation is enhanced during cell division, at which time vimentin filaments are significantly reorganized. Phosphorylation by PKN1 inhibits the formation of filaments. Filament disassembly during mitosis is promoted by phosphorylation at Ser-37 as well as by nestin. Phosphorylated at Ser-38 by CDK5 during neutrophil secretion in the cytoplasm. Phosphorylated by STK33. Phosphorylated on tyrosine residues by SRMS. Post-translationally, S-nitrosylation is induced by interferon-gamma and oxidatively-modified low-densitity lipoprotein (LDL(ox)) possibly implicating the iNOS-S100A8/9 transnitrosylase complex.

It localises to the cytoplasm. The protein resides in the cytoskeleton. Its subcellular location is the nucleus matrix. It is found in the cell membrane. Vimentins are class-III intermediate filaments found in various non-epithelial cells, especially mesenchymal cells. Vimentin is attached to the nucleus, endoplasmic reticulum, and mitochondria, either laterally or terminally. Plays a role in cell directional movement, orientation, cell sheet organization and Golgi complex polarization at the cell migration front. Protects SCRIB from proteasomal degradation and facilitates its localization to intermediate filaments in a cell contact-mediated manner. Its function is as follows. Involved with LARP6 in the stabilization of type I collagen mRNAs for CO1A1 and CO1A2. The chain is Vimentin (VIM) from Cricetulus griseus (Chinese hamster).